The sequence spans 199 residues: Tegument protein UL14 homolog (199 aa).

Over residues 176–191 the composition is skewed to polar residues; sequence TDMNQMQPQPISKNEN. The tract at residues 176–199 is disordered; sequence TDMNQMQPQPISKNENPPTPHTDV.

The protein belongs to the alphaherpesvirinae HHV-1 UL14 protein family.

The protein localises to the virion tegument. It localises to the host cytoplasm. It is found in the host nucleus. Functionally, contributes to the nuclear transport of the viral transcriptional activator VP16 homolog during the early phase of infection. Therefore, participates indirectly in the regulation of the immediate-early gene expression. Additionally, seems to be important for efficient nuclear targeting of capsids. The sequence is that of Tegument protein UL14 homolog from Varicella-zoster virus (strain Dumas) (HHV-3).